A 163-amino-acid polypeptide reads, in one-letter code: Phosphopantetheine adenylyltransferase (163 aa).

2 residues coordinate ATP: Ser10 and His18. Ser10 lines the substrate pocket. Substrate is bound by residues Lys42, Thr75, and Arg89. ATP-binding positions include 90–92, Glu100, and 125–131; these read GIR and YAHVSSS.

The protein belongs to the bacterial CoaD family. As to quaternary structure, homohexamer. Mg(2+) is required as a cofactor.

It is found in the cytoplasm. It carries out the reaction (R)-4'-phosphopantetheine + ATP + H(+) = 3'-dephospho-CoA + diphosphate. It functions in the pathway cofactor biosynthesis; coenzyme A biosynthesis; CoA from (R)-pantothenate: step 4/5. Its function is as follows. Reversibly transfers an adenylyl group from ATP to 4'-phosphopantetheine, yielding dephospho-CoA (dPCoA) and pyrophosphate. In Enterococcus faecalis (strain ATCC 700802 / V583), this protein is Phosphopantetheine adenylyltransferase.